A 147-amino-acid polypeptide reads, in one-letter code: Large ribosomal subunit protein uL13 (147 aa).

It belongs to the universal ribosomal protein uL13 family. In terms of assembly, part of the 50S ribosomal subunit.

Functionally, this protein is one of the early assembly proteins of the 50S ribosomal subunit, although it is not seen to bind rRNA by itself. It is important during the early stages of 50S assembly. This Kocuria rhizophila (strain ATCC 9341 / DSM 348 / NBRC 103217 / DC2201) protein is Large ribosomal subunit protein uL13.